We begin with the raw amino-acid sequence, 140 residues long: ATP synthase epsilon chain (140 aa).

Belongs to the ATPase epsilon chain family. As to quaternary structure, F-type ATPases have 2 components, CF(1) - the catalytic core - and CF(0) - the membrane proton channel. CF(1) has five subunits: alpha(3), beta(3), gamma(1), delta(1), epsilon(1). CF(0) has three main subunits: a, b and c.

Its subcellular location is the cell inner membrane. Functionally, produces ATP from ADP in the presence of a proton gradient across the membrane. The protein is ATP synthase epsilon chain of Legionella pneumophila (strain Paris).